The following is a 245-amino-acid chain: 1-(5-phosphoribosyl)-5-[(5-phosphoribosylamino)methylideneamino] imidazole-4-carboxamide isomerase (245 aa).

Asp-8 (proton acceptor) is an active-site residue. The active-site Proton donor is the Asp-130.

This sequence belongs to the HisA/HisF family.

The protein localises to the cytoplasm. It carries out the reaction 1-(5-phospho-beta-D-ribosyl)-5-[(5-phospho-beta-D-ribosylamino)methylideneamino]imidazole-4-carboxamide = 5-[(5-phospho-1-deoxy-D-ribulos-1-ylimino)methylamino]-1-(5-phospho-beta-D-ribosyl)imidazole-4-carboxamide. It participates in amino-acid biosynthesis; L-histidine biosynthesis; L-histidine from 5-phospho-alpha-D-ribose 1-diphosphate: step 4/9. The sequence is that of 1-(5-phosphoribosyl)-5-[(5-phosphoribosylamino)methylideneamino] imidazole-4-carboxamide isomerase from Pseudomonas fluorescens (strain Pf0-1).